A 730-amino-acid polypeptide reads, in one-letter code: Matrix metalloproteinase-9 (730 aa).

Residues 1–19 form the signal peptide; sequence MSPWQPLLLALLAFGCSSA. Positions 20 to 107 are cleaved as a propeptide — activation peptide; it reads APYQRQPTFV…PRCGVPDVGR (88 aa). A glycan (N-linked (GlcNAc...) asparagine) is linked at N39. The short motif at 98 to 105 is the Cysteine switch element; the sequence is PRCGVPDV. Position 100 (C100) interacts with Zn(2+). 2 N-linked (GlcNAc...) asparagine glycosylation sites follow: N120 and N127. Residues D131 and D165 each contribute to the Ca(2+) site. Zn(2+)-binding residues include H175 and D177. Residues D182, G183, D185, and L187 each contribute to the Ca(2+) site. H190 provides a ligand contact to Zn(2+). Residues G197, Q199, and D201 each contribute to the Ca(2+) site. H203 serves as a coordination point for Zn(2+). Positions 205, 206, and 208 each coordinate Ca(2+). 3 Fibronectin type-II domains span residues 225 to 273, 283 to 331, and 342 to 390; these read SNGA…FCPS, GEGK…FCPT, and SAGE…FCPD. Disulfide bonds link C230–C256, C244–C271, C288–C314, C302–C329, C347–C373, and C361–C388. Zn(2+) is bound at residue H401. E402 is an active-site residue. The Zn(2+) site is built by H405 and H411. The tract at residues 442-529 is disordered; sequence LYGRGSKPDP…SEASTESLSP (88 aa). Pro residues predominate over residues 463-477; that stretch reads PTAPPTMCPTIPPTA. Residues 478 to 489 show a composition bias toward low complexity; it reads YPTVGPTVGPTG. The segment covering 490 to 514 has biased composition (pro residues); that stretch reads APSPGPTSSPSPGPTGAPSPGPTAP. C534 and C729 are oxidised to a cystine. 4 Hemopexin repeats span residues 536–581, 582–626, 628–675, and 676–729; these read VDVF…WPAL, PATL…GLGP, VTHV…FSGV, and PWNS…LLQC.

It belongs to the peptidase M10A family. As to quaternary structure, exists as monomer or homodimer; disulfide-linked. Also exists as heterodimer with LCN2. Macrophages and transformed cell lines produce only the monomeric form. Interacts with ECM1. Zn(2+) is required as a cofactor. Requires Ca(2+) as cofactor. In terms of processing, N- and O-glycosylated.

It localises to the secreted. It is found in the extracellular space. Its subcellular location is the extracellular matrix. The catalysed reaction is Cleavage of gelatin types I and V and collagen types IV and V.. With respect to regulation, inhibited by histatin-3 1/24 (histatin-5). Inhibited by ECM1. In terms of biological role, matrix metalloproteinase that plays an essential role in local proteolysis of the extracellular matrix and in leukocyte migration. Could play a role in bone osteoclastic resorption. Cleaves KiSS1 at a Gly-|-Leu bond. Cleaves NINJ1 to generate the Secreted ninjurin-1 form. Cleaves type IV and type V collagen into large C-terminal three quarter fragments and shorter N-terminal one quarter fragments. Degrades fibronectin but not laminin or Pz-peptide. The sequence is that of Matrix metalloproteinase-9 (Mmp9) from Mus musculus (Mouse).